The chain runs to 595 residues: L-allo-isoleucine:holo-[CmaA peptidyl-carrier protein] ligase (595 aa).

The 76-residue stretch at valine 507–alanine 582 folds into the Carrier domain. Residue serine 542 is modified to O-(pantetheine 4'-phosphoryl)serine.

Belongs to the ATP-dependent AMP-binding enzyme family. In terms of assembly, homodimer. The cofactor is pantetheine 4'-phosphate.

It carries out the reaction L-alloisoleucine + holo-[CmaA peptidyl-carrier protein] + ATP = L-alloisoleucyl-[CmaA peptidyl-carrier protein] + AMP + diphosphate. In terms of biological role, involved in the biosynthesis of the phytotoxin coronatine (COR) which mimics the plant hormone jasmonic acid isoleucine and promotes opening of stomata for bacterial entry, bacterial growth in the apoplast, systemic susceptibility, and disease symptoms. CmaA catalyzes the adenylation of L-allo-isoleucine (via the A domain) and the attachment of L-allo-isoleucine to the 4'-phosphopantetheine arm located within the T domain of CmaA. It can also use L-isoleucine, L-leucine and L-valine as substrates. This chain is L-allo-isoleucine:holo-[CmaA peptidyl-carrier protein] ligase, found in Pseudomonas savastanoi pv. glycinea (Pseudomonas syringae pv. glycinea).